A 215-amino-acid polypeptide reads, in one-letter code: Octanoyltransferase (215 aa).

Residues 31–206 (TSAEDEIWLV…QLVKHLDYAE (176 aa)) enclose the BPL/LPL catalytic domain. Residues 70–77 (RGGQVTYH), 137–139 (SLG), and 150–152 (GLA) each bind substrate. C168 acts as the Acyl-thioester intermediate in catalysis.

It belongs to the LipB family.

The protein localises to the cytoplasm. The catalysed reaction is octanoyl-[ACP] + L-lysyl-[protein] = N(6)-octanoyl-L-lysyl-[protein] + holo-[ACP] + H(+). The protein operates within protein modification; protein lipoylation via endogenous pathway; protein N(6)-(lipoyl)lysine from octanoyl-[acyl-carrier-protein]: step 1/2. Its function is as follows. Catalyzes the transfer of endogenously produced octanoic acid from octanoyl-acyl-carrier-protein onto the lipoyl domains of lipoate-dependent enzymes. Lipoyl-ACP can also act as a substrate although octanoyl-ACP is likely to be the physiological substrate. The sequence is that of Octanoyltransferase from Pseudomonas fluorescens (strain SBW25).